Here is a 107-residue protein sequence, read N- to C-terminus: Large ribosomal subunit protein uL24 (107 aa).

It belongs to the universal ribosomal protein uL24 family. As to quaternary structure, part of the 50S ribosomal subunit.

Its function is as follows. One of two assembly initiator proteins, it binds directly to the 5'-end of the 23S rRNA, where it nucleates assembly of the 50S subunit. One of the proteins that surrounds the polypeptide exit tunnel on the outside of the subunit. In Mycobacterium ulcerans (strain Agy99), this protein is Large ribosomal subunit protein uL24.